We begin with the raw amino-acid sequence, 152 residues long: Protein SprT-like (152 aa).

One can recognise a SprT-like domain in the interval 7 to 147 (QRLVEEVSLQ…CGKCKGKLKP (141 aa)). His67 is a binding site for Zn(2+). The active site involves Glu68. His71 provides a ligand contact to Zn(2+).

It belongs to the SprT family. The cofactor is Zn(2+).

It localises to the cytoplasm. The polypeptide is Protein SprT-like (Bacillus cereus (strain ATCC 14579 / DSM 31 / CCUG 7414 / JCM 2152 / NBRC 15305 / NCIMB 9373 / NCTC 2599 / NRRL B-3711)).